Consider the following 527-residue polypeptide: Berberine bridge enzyme-like 10 (527 aa).

An N-terminal signal peptide occupies residues 1–20; the sequence is MEKLLVISLLLLISTSVTTS. A disulfide bridge connects residues C32 and C95. The N-linked (GlcNAc...) asparagine glycan is linked to N53. In terms of domain architecture, FAD-binding PCMH-type spans 73 to 248; the sequence is TTPKPISVVA…LGYKIQLVPV (176 aa). H110 bears the Pros-8alpha-FAD histidine mark. N-linked (GlcNAc...) asparagine glycans are attached at residues N137 and N293.

This sequence belongs to the oxygen-dependent FAD-linked oxidoreductase family. Requires FAD as cofactor.

The protein localises to the secreted. It is found in the cell wall. The protein is Berberine bridge enzyme-like 10 of Arabidopsis thaliana (Mouse-ear cress).